The following is a 365-amino-acid chain: tRNA-specific 2-thiouridylase MnmA (365 aa).

Residues 9-16 (AMSGGVDS) and Met35 each bind ATP. Cys105 (nucleophile) is an active-site residue. Cysteines 105 and 203 form a disulfide. Residue Gly129 coordinates ATP. Positions 153-155 (KDQ) are interaction with tRNA. Cys203 (cysteine persulfide intermediate) is an active-site residue. The segment at 308–309 (RY) is interaction with tRNA.

Belongs to the MnmA/TRMU family.

It is found in the cytoplasm. The catalysed reaction is S-sulfanyl-L-cysteinyl-[protein] + uridine(34) in tRNA + AH2 + ATP = 2-thiouridine(34) in tRNA + L-cysteinyl-[protein] + A + AMP + diphosphate + H(+). In terms of biological role, catalyzes the 2-thiolation of uridine at the wobble position (U34) of tRNA, leading to the formation of s(2)U34. This chain is tRNA-specific 2-thiouridylase MnmA, found in Pelotomaculum thermopropionicum (strain DSM 13744 / JCM 10971 / SI).